The sequence spans 362 residues: MERITVTLGERSYPITIAAGLFNEPASFLPLKSGDQVMLVTNETLAPLYLDKVRGVLERAGVNVDSVILPDGEQYKSLTVLDTVFTALLKKPHGRDTTLVALGGGVIGDLTGFAAASYQRGVRFIQVPTTLLSQVDSSVGGKTAVNHPLGKNMIGAFYQPASVVVDLDCLKTLPARELASGLAEVIKYGIILDADFFTWLEGNLDALLRLDGPAMAYCIRRCCELKAEVVAADEREAGLRALLNLGHTFGHAIEAEMGYGNWLHGEAVAAGIVMAARASERLGQFSSADTQRIIALLERAGLPVNGPCEMSAQDYLPHMLRDKKVLAGELRLVLPLTIGKSEVRGGVSHEVVLSAIADCQQA.

NAD(+) is bound by residues 71 to 76 (DGEQYK), 105 to 109 (GVIGD), 129 to 130 (TT), Lys-142, Lys-151, and 169 to 172 (CLKT). The Zn(2+) site is built by Glu-184, His-247, and His-264.

This sequence belongs to the sugar phosphate cyclases superfamily. Dehydroquinate synthase family. NAD(+) is required as a cofactor. It depends on Co(2+) as a cofactor. Requires Zn(2+) as cofactor.

The protein localises to the cytoplasm. It carries out the reaction 7-phospho-2-dehydro-3-deoxy-D-arabino-heptonate = 3-dehydroquinate + phosphate. The protein operates within metabolic intermediate biosynthesis; chorismate biosynthesis; chorismate from D-erythrose 4-phosphate and phosphoenolpyruvate: step 2/7. Its function is as follows. Catalyzes the conversion of 3-deoxy-D-arabino-heptulosonate 7-phosphate (DAHP) to dehydroquinate (DHQ). This chain is 3-dehydroquinate synthase, found in Salmonella typhi.